Consider the following 814-residue polypeptide: Kinesin-like protein KIF6 (814 aa).

The 341-residue stretch at T5–I345 folds into the Kinesin motor domain. G97–T104 contacts ATP. Coiled coils occupy residues N356–E385, L456–H494, and E588–E683. A disordered region spans residues L752–D788. Residues P759 to L771 show a composition bias toward polar residues.

Belongs to the TRAFAC class myosin-kinesin ATPase superfamily. Kinesin family.

The protein localises to the cytoplasm. Its subcellular location is the cytoskeleton. The sequence is that of Kinesin-like protein KIF6 (KIF6) from Homo sapiens (Human).